The primary structure comprises 684 residues: Cleavage and polyadenylation specificity factor 73 (684 aa).

Residues histidine 77, histidine 79, aspartate 81, histidine 82, histidine 164, and aspartate 185 each coordinate Zn(2+). Residue histidine 402 is the Proton donor of the active site. Histidine 424 contacts Zn(2+).

The protein belongs to the metallo-beta-lactamase superfamily. RNA-metabolizing metallo-beta-lactamase-like family. CPSF3 subfamily. As to quaternary structure, component of the cleavage and polyadenylation specificity factor (CPSF) complex, composed of at least Clp, Cpsf73, Cpsf100 and Cpsf160. Interacts with Sym and Cpsf100 forming a core cleavage factor required for both polyadenylated and histone mRNA processing. Interacts with Slbp and Lsm11. Requires Zn(2+) as cofactor.

The protein resides in the nucleus. Its function is as follows. Component of the cleavage and polyadenylation specificity factor (CPSF) complex that plays a key role in pre-mRNA 3'-end formation, recognizing the AAUAAA signal sequence and interacting with poly(A) polymerase and other factors to bring about cleavage and poly(A) addition. Has endonuclease activity and functions as an mRNA 3'-end-processing endonuclease. Required for the cotranscriptional processing of 3'-ends of polyadenylated and histone pre-mRNA. The polypeptide is Cleavage and polyadenylation specificity factor 73 (Cpsf73) (Drosophila melanogaster (Fruit fly)).